The primary structure comprises 380 residues: Cytochrome b (380 aa).

The next 4 helical transmembrane spans lie at 28–48 (IGSL…FLSL), 72–93 (WLVR…YAHI), 109–129 (WLVG…GYVL), and 174–194 (FYSF…VHLL). Heme b contacts are provided by H78 and H92. Heme b-binding residues include H178 and H192. H197 contributes to the a ubiquinone binding site. A run of 4 helical transmembrane segments spans residues 222–243 (WKIL…CYIT), 285–305 (IGGV…PLAL), 317–337 (IGQL…WLGA), and 344–364 (YISL…LYMI).

This sequence belongs to the cytochrome b family. In terms of assembly, the main subunits of complex b-c1 are: cytochrome b, cytochrome c1 and the Rieske protein. The cofactor is heme b.

Its subcellular location is the mitochondrion inner membrane. Functionally, component of the ubiquinol-cytochrome c reductase complex (complex III or cytochrome b-c1 complex) that is part of the mitochondrial respiratory chain. The b-c1 complex mediates electron transfer from ubiquinol to cytochrome c. Contributes to the generation of a proton gradient across the mitochondrial membrane that is then used for ATP synthesis. This chain is Cytochrome b (MT-CYB), found in Cepaea nemoralis (Banded wood snail).